Here is a 294-residue protein sequence, read N- to C-terminus: NADH-cytochrome b5 reductase 2 (294 aa).

Residues 11–27 form a helical membrane-spanning segment; that stretch reads VLLPVVAAATSIGLVYH. One can recognise an FAD-binding FR-type domain in the interval 45–149; that stretch reads DEWIDLKLKK…KGPIVKWKWE (105 aa). Residue 152-187 coordinates FAD; that stretch reads QFQSIALIGGGTGITPLYQLLHEITKNPEDKTKVKL.

The protein belongs to the flavoprotein pyridine nucleotide cytochrome reductase family. FAD serves as cofactor.

The protein resides in the mitochondrion outer membrane. The catalysed reaction is 2 Fe(III)-[cytochrome b5] + NADH = 2 Fe(II)-[cytochrome b5] + NAD(+) + H(+). May mediate the reduction of outer membrane cytochrome b5. This is NADH-cytochrome b5 reductase 2 (MCR1) from Meyerozyma guilliermondii (strain ATCC 6260 / CBS 566 / DSM 6381 / JCM 1539 / NBRC 10279 / NRRL Y-324) (Yeast).